The following is a 186-amino-acid chain: Translation initiation factor IF-3 (186 aa).

The interval 1-20 (MINRNSGKDRDRSRSGDKEL) is disordered.

Belongs to the IF-3 family. As to quaternary structure, monomer.

The protein resides in the cytoplasm. IF-3 binds to the 30S ribosomal subunit and shifts the equilibrium between 70S ribosomes and their 50S and 30S subunits in favor of the free subunits, thus enhancing the availability of 30S subunits on which protein synthesis initiation begins. The chain is Translation initiation factor IF-3 from Borrelia duttonii (strain Ly).